The sequence spans 260 residues: Thiamine thiazole synthase (260 aa).

NAD(+) contacts are provided by residues Ser41, 60-61, Gly68, Val131, and 159-161; these read ER and HVD. Fe cation-binding residues include Asp161 and His176. Met225 serves as a coordination point for NAD(+). Arg235 lines the glycine pocket.

This sequence belongs to the THI4 family. In terms of assembly, homooctamer; tetramer of dimers. The cofactor is Fe(2+).

It catalyses the reaction hydrogen sulfide + glycine + NAD(+) = ADP-5-ethyl-4-methylthiazole-2-carboxylate + nicotinamide + 3 H2O + H(+). Its pathway is cofactor biosynthesis; thiamine diphosphate biosynthesis. Its function is as follows. Involved in the biosynthesis of the thiazole moiety of thiamine. Catalyzes the conversion of NAD and glycine to adenosine diphosphate 5-(2-hydroxyethyl)-4-methylthiazole-2-carboxylate (ADT), an adenylated thiazole intermediate, using free sulfide as a source of sulfur. This Archaeoglobus fulgidus (strain ATCC 49558 / DSM 4304 / JCM 9628 / NBRC 100126 / VC-16) protein is Thiamine thiazole synthase.